The chain runs to 232 residues: MNRSRLISCTALVLALIAQNSFAGGVALSSTRVIYDGSRKEASLTVNNKSTTDEFLIQSWIDDANGNKKTPFIITPPLFKLSPTKNNVLRIVNTTNTLPQDRESVYWINVKAIPAKSEDAEAKNVLQIAVRTRLKLFYRPAGLKGNSMDGWNKLQFTSAGANQIKVENPSAFNLTFNKFYANGRDIEKTGMVPAKGSLNIELPAGTGKVSEVKYNIINDFGTAGDMLTQRVN.

An N-terminal signal peptide occupies residues 1–23 (MNRSRLISCTALVLALIAQNSFA).

The protein belongs to the periplasmic pilus chaperone family.

Its subcellular location is the periplasm. Required for the biogenesis of long polar fimbria; binds and interact with LpfA. This Salmonella typhimurium (strain LT2 / SGSC1412 / ATCC 700720) protein is Chaperone protein LpfB (lpfB).